Here is a 117-residue protein sequence, read N- to C-terminus: ATP-dependent Clp protease adapter protein ClpS 1 (117 aa).

Residues 1–33 form a disordered region; the sequence is MIAMPVRMQQGSEGDGGGPSRGTSVITRTKPKT.

The protein belongs to the ClpS family. Binds to the N-terminal domain of the chaperone ClpA.

In terms of biological role, involved in the modulation of the specificity of the ClpAP-mediated ATP-dependent protein degradation. The protein is ATP-dependent Clp protease adapter protein ClpS 1 of Rhizobium meliloti (strain 1021) (Ensifer meliloti).